A 370-amino-acid polypeptide reads, in one-letter code: MIKNHFTFQKLNGITPYIWTIFFILPFYFIWKSSSTFVIIVGIILTLLFFSVYRFAFVSKGWTIYLWGFLLIGISTASITLFSYIYFAFFIAYFIGNIKERVPFHILYYVHLISAAVAANFSLVLKKEFFLTQIPFVVITLISAILLPFSIKSRKERERLEEKLEDANERIAELVKLEERQRIARDLHDTLGQKLSLIGLKSDLARKLIYKDPEQAARELKSVQQTARTSLNEVRKIVSSMKGIRLKDELINIKQILEAADIMFIYEEEKWPENISLLNENILSMCLKEAVTNVVKHSQAKTCRVDIQQLWKEVVITVSDDGTFKGEENSFSKGHGLLGMRERLEFANGSLHIDTENGTKLTMAIPNNSK.

Residues 1–10 lie on the Extracellular side of the membrane; the sequence is MIKNHFTFQK. A helical transmembrane segment spans residues 11 to 31; sequence LNGITPYIWTIFFILPFYFIW. Residues 32–36 are Cytoplasmic-facing; that stretch reads KSSST. A helical membrane pass occupies residues 37–57; sequence FVIIVGIILTLLFFSVYRFAF. Residues 58-70 lie on the Extracellular side of the membrane; the sequence is VSKGWTIYLWGFL. Residues 71–91 form a helical membrane-spanning segment; that stretch reads LIGISTASITLFSYIYFAFFI. Topologically, residues 92–103 are cytoplasmic; it reads AYFIGNIKERVP. The helical transmembrane segment at 104–124 threads the bilayer; it reads FHILYYVHLISAAVAANFSLV. At 125-128 the chain is on the extracellular side; sequence LKKE. A helical transmembrane segment spans residues 129–149; sequence FFLTQIPFVVITLISAILLPF. Residues 150–370 are Cytoplasmic-facing; sequence SIKSRKERER…LTMAIPNNSK (221 aa). The Histidine kinase domain occupies 186-369; that stretch reads DLHDTLGQKL…KLTMAIPNNS (184 aa). Residue histidine 188 is modified to Phosphohistidine; by autocatalysis.

It localises to the cell membrane. The enzyme catalyses ATP + protein L-histidine = ADP + protein N-phospho-L-histidine.. Member of the two-component regulatory system DesR/DesK, responsible for cold induction of the des gene coding for the Delta5 acyl-lipid desaturase. Acts as a sensor of the membrane fluidity. Probably activates DesR by phosphorylation. The protein is Sensor histidine kinase DesK (desK) of Bacillus subtilis (strain 168).